The sequence spans 177 residues: Putative HVA22-like protein g (177 aa).

The disordered stretch occupies residues 145-165 (QSTPKSKAEEKKETTIPKLDD). Positions 150-165 (SKAEEKKETTIPKLDD) are enriched in basic and acidic residues.

This sequence belongs to the DP1 family.

In Arabidopsis thaliana (Mouse-ear cress), this protein is Putative HVA22-like protein g (HVA22G).